The sequence spans 111 residues: uncharacterized protein (111 aa).

As to quaternary structure, homodimer, or homotetramer.

This is an uncharacterized protein from Bacillus subtilis (strain 168).